Reading from the N-terminus, the 253-residue chain is Probable transcriptional regulatory protein Mlut_12910 (253 aa).

The protein belongs to the TACO1 family.

Its subcellular location is the cytoplasm. This chain is Probable transcriptional regulatory protein Mlut_12910, found in Micrococcus luteus (strain ATCC 4698 / DSM 20030 / JCM 1464 / CCM 169 / CCUG 5858 / IAM 1056 / NBRC 3333 / NCIMB 9278 / NCTC 2665 / VKM Ac-2230) (Micrococcus lysodeikticus).